The sequence spans 362 residues: UDP-arabinopyranose mutase 3 (362 aa).

The short motif at 106-108 is the DXD motif element; it reads DDD. A glycan (N-linked (Glc...) arginine) is linked at R154.

This sequence belongs to the RGP family. As to quaternary structure, heterodimer with RGP1. The cofactor is Mn(2+). It depends on Mg(2+) as a cofactor. In terms of processing, reversibly glycosylated in vitro by UDP-glucose, UDP-xylose and UDP-galactose, but not UDP-mannose. Specifically expressed in developing seeds.

The protein resides in the cytoplasm. Its subcellular location is the cytosol. It is found in the golgi apparatus. It catalyses the reaction UDP-beta-L-arabinofuranose = UDP-beta-L-arabinopyranose. UDP-L-arabinose mutase involved in the biosynthesis of cell wall non-cellulosic polysaccharides. Catalyzes the interconvertion of UDP-L-arabinopyranose (UDP-Arap) and UDP-L-arabinofuranose (UDP-Araf). Preferentially catalyzes the formation of UDP-Arap from UDP-Araf. At thermodynamic equilibrium in vitro the ratio of the pyranose form over the furanose form is 95:5. Is not active on other UDP-sugars (UDP-Gal, UDP-Xyl, UDP-Glc, GDP-Man and GDP-Fuc). Is probably active as heteromer in vivo. This is UDP-arabinopyranose mutase 3 from Arabidopsis thaliana (Mouse-ear cress).